The sequence spans 1556 residues: uncharacterized protein (1556 aa).

An N-acetylserine modification is found at Ser2. Residues Asn145–Lys156 show a composition bias toward basic and acidic residues. The tract at residues Asn145–Asp170 is disordered. A Helicase ATP-binding domain is found at Ser378–Pro583. Glu391–Thr398 serves as a coordination point for ATP. Ser810 carries the phosphoserine modification. A disordered region spans residues Ser810–Met850. Composition is skewed to basic and acidic residues over residues Met817–Ser827 and Arg834–Asn846. An RING-type zinc finger spans residues Cys1239–Lys1277. The segment covering Arg1297–Ala1309 has biased composition (basic and acidic residues). 2 disordered regions span residues Arg1297–Asn1319 and Glu1508–Glu1534. Residues Asp1310–Asn1319 are compositionally biased toward low complexity. Residues Lys1363–Ala1531 form the Helicase C-terminal domain. Over residues Glu1508–Glu1518 the composition is skewed to basic and acidic residues. Residues Ala1519–Asp1529 are compositionally biased toward acidic residues.

Belongs to the SNF2/RAD54 helicase family.

The protein localises to the nucleus. Is probably involved in a pathway contributing to genomic integrity. This is an uncharacterized protein from Saccharomyces cerevisiae (strain ATCC 204508 / S288c) (Baker's yeast).